The chain runs to 92 residues: Acylphosphatase (92 aa).

The Acylphosphatase-like domain occupies 5–92 (RAHVVVSGKV…GEFSGFKIAF (88 aa)). Catalysis depends on residues R20 and N38.

It belongs to the acylphosphatase family.

It catalyses the reaction an acyl phosphate + H2O = a carboxylate + phosphate + H(+). This is Acylphosphatase (acyP) from Pelotomaculum thermopropionicum (strain DSM 13744 / JCM 10971 / SI).